The primary structure comprises 533 residues: Metallothionein expression activator (533 aa).

2 consecutive C2H2-type zinc fingers follow at residues 443 to 472 and 473 to 500; these read YVCL…SDRP and YRCD…NGRP. Residues 501–524 form a C2H2-type 3; atypical zinc finger; the sequence is YVCECLKRFNRLDALNRHKQRNIC.

It localises to the nucleus. Functionally, regulates the transcription of genes required for cell separation. This is Metallothionein expression activator (ace2) from Schizosaccharomyces pombe (strain 972 / ATCC 24843) (Fission yeast).